A 361-amino-acid polypeptide reads, in one-letter code: Protein-L-isoaspartate O-methyltransferase domain-containing protein 2 (361 aa).

Residue glycine 2 is the site of N-myristoyl glycine attachment. Serine 64 is a catalytic residue. 3 adoMet binding motif regions span residues 85-94, 160-164, and 181-191; these read LNLGSGTGYL, YDRVY, and LKVGGILVMPL. Residues 240–250 are BC-box; sequence VRSLQDLARIA. Residues 303-336 form a disordered region; sequence SNPSDDNSCEDLEEERREEEEKTPPETKPDPPVN. Acidic residues predominate over residues 309 to 320; it reads NSCEDLEEERRE. Over residues 321-331 the composition is skewed to basic and acidic residues; that stretch reads EEEKTPPETKP. A CUL-box region spans residues 345-348; it reads LPLP.

Belongs to the methyltransferase superfamily. L-isoaspartyl/D-aspartyl protein methyltransferase family.

It is found in the cytoplasm. Functionally, may act as a substrate recognition component of an ECS (Elongin BC-CUL5-SOCS-box protein) E3 ubiquitin ligase complex which mediates the ubiquitination and subsequent proteasomal degradation of target proteins. May bind to the methyltransferase cofactor S-adenosylmethionine (AdoMet) via the N-terminal AdoMet binding motif, but probably does not display methyltransferase activity. The protein is Protein-L-isoaspartate O-methyltransferase domain-containing protein 2 (PCMTD2) of Homo sapiens (Human).